The chain runs to 483 residues: Keratin, type II cytoskeletal 8 (483 aa).

A compositionally biased stretch (polar residues) spans 1-16 (MSIRVTQKSYKVSTSG). A disordered region spans residues 1–41 (MSIRVTQKSYKVSTSGPRAFSSRSYTSGPGSRISSSSFSRV). The interval 1 to 90 (MSIRVTQKSY…DPNIQAVRTQ (90 aa)) is head. A Phosphoserine; by PKC/PRKCE modification is found at serine 9. A Glycyl lysine isopeptide (Lys-Gly) (interchain with G-Cter in SUMO2) cross-link involves residue lysine 11. Phosphoserine is present on residues serine 13, serine 15, serine 21, and serine 22. Arginine 23 carries the post-translational modification Omega-N-methylarginine. A Phosphoserine; by PKC/PRKCE modification is found at serine 24. Residues 24–41 (SYTSGPGSRISSSSFSRV) are compositionally biased toward low complexity. Threonine 26 carries the phosphothreonine modification. Residues serine 27 and serine 31 each carry the phosphoserine modification. Arginine 32 is subject to Omega-N-methylarginine. 3 positions are modified to phosphoserine: serine 34, serine 37, and serine 39. Arginine 40 carries the post-translational modification Omega-N-methylarginine. 2 positions are modified to phosphoserine: serine 43 and serine 44. The residue at position 47 (arginine 47) is an Asymmetric dimethylarginine; alternate. An Omega-N-methylarginine; alternate modification is found at arginine 47. Serine 74 carries the post-translational modification Phosphoserine; by MAPK. Residues 91–126 (EKEQIKTLNNKFASFIDKVRFLEQQNKMLETKWSLL) are coil 1A. Residues 91-402 (EKEQIKTLNN…KLLEGEESRL (312 aa)) form the IF rod domain. At lysine 101 the chain carries N6-malonyllysine. Glycyl lysine isopeptide (Lys-Gly) (interchain with G-Cter in SUMO2) cross-links involve residues lysine 122 and lysine 130. Positions 127–143 (QQQKTARSNMDNMFESY) are linker 1. The coil 1B stretch occupies residues 144–235 (INNLRRQLET…QLYEEEIREL (92 aa)). A Glycyl lysine isopeptide (Lys-Gly) (interchain with G-Cter in SUMO1); alternate cross-link involves residue lysine 197. Residue lysine 197 forms a Glycyl lysine isopeptide (Lys-Gly) (interchain with G-Cter in SUMO2); alternate linkage. Lysine 207 is modified (N6-acetyllysine). Position 228 is a phosphotyrosine (tyrosine 228). The tract at residues 236-259 (QSQISDTSVVLSMDNSRSLDMDSI) is linker 12. Phosphoserine is present on residues serine 253 and serine 258. A coil 2 region spans residues 260–398 (IAEVKAQYED…ATYRKLLEGE (139 aa)). The tract at residues 261-382 (AEVKAQYEDI…EYQELMNVKL (122 aa)) is necessary for interaction with PNN. Residue lysine 264 forms a Glycyl lysine isopeptide (Lys-Gly) (interchain with G-Cter in SUMO2) linkage. The residue at position 274 (serine 274) is a Phosphoserine. Lysine 285 is covalently cross-linked (Glycyl lysine isopeptide (Lys-Gly) (interchain with G-Cter in SUMO2)). A Phosphoserine modification is found at serine 291. A Glycyl lysine isopeptide (Lys-Gly) (interchain with G-Cter in SUMO2); alternate cross-link involves residue lysine 295. N6-acetyllysine; alternate is present on lysine 295. Lysine 304 participates in a covalent cross-link: Glycyl lysine isopeptide (Lys-Gly) (interchain with G-Cter in SUMO2). A Glycyl lysine isopeptide (Lys-Gly) (interchain with G-Cter in SUMO2); alternate cross-link involves residue lysine 325. Lysine 325 is modified (N6-acetyllysine; alternate). Serine 330 is subject to Phosphoserine. A Glycyl lysine isopeptide (Lys-Gly) (interchain with G-Cter in SUMO2) cross-link involves residue lysine 393. The tail stretch occupies residues 399 to 483 (ESRLESGMQN…VSESSDVLPK (85 aa)). Phosphoserine occurs at positions 400, 404, 410, 417, and 424. Serine 432 is subject to Phosphoserine; by CaMK2 and MAPK. Lysine 472 participates in a covalent cross-link: Glycyl lysine isopeptide (Lys-Gly) (interchain with G-Cter in SUMO1); alternate. Residue lysine 472 forms a Glycyl lysine isopeptide (Lys-Gly) (interchain with G-Cter in SUMO2); alternate linkage. 3 positions are modified to phosphoserine: serine 475, serine 477, and serine 478.

This sequence belongs to the intermediate filament family. As to quaternary structure, heterotetramer of two type I and two type II keratins. Forms a heterodimer with KRT18. Associates with KRT20. Interacts with PLEC isoform 1C, when in a heterodimer with KRT18. Interacts with PNN. When associated with KRT19, interacts with DMD. Interacts with TCHP. Interacts with APEX1. Interacts with GPER1. Interacts with EPPK1. Interacts with PKP1 and PKP2. In terms of assembly, (Microbial infection) Interacts with hepatitis C virus/HCV core protein. In terms of processing, phosphorylation on serine residues is enhanced during EGF stimulation and mitosis. Ser-74 phosphorylation plays an important role in keratin filament reorganization. Post-translationally, O-glycosylated. O-GlcNAcylation at multiple sites increases solubility, and decreases stability by inducing proteasomal degradation. O-glycosylated (O-GlcNAcylated), in a cell cycle-dependent manner. As to expression, observed in muscle fibers accumulating in the costameres of myoplasm at the sarcolemma membrane in structures that contain dystrophin and spectrin. Expressed in gingival mucosa and hard palate of the oral cavity.

The protein localises to the cytoplasm. It localises to the nucleus. It is found in the nucleoplasm. The protein resides in the nucleus matrix. Functionally, together with KRT19, helps to link the contractile apparatus to dystrophin at the costameres of striated muscle. This is Keratin, type II cytoskeletal 8 (KRT8) from Homo sapiens (Human).